Consider the following 385-residue polypeptide: Putative hydroxypyruvate reductase (385 aa).

The catalysed reaction is (R)-glycerate + NAD(+) = 3-hydroxypyruvate + NADH + H(+). The enzyme catalyses (R)-glycerate + NADP(+) = 3-hydroxypyruvate + NADPH + H(+). Its pathway is carbohydrate acid metabolism; tartrate degradation; 3-hydroxypyruvate from D-glycerate: step 1/1. In terms of biological role, degrades an unidentified toxic product from the first step of tartrate degradation. The polypeptide is Putative hydroxypyruvate reductase (ttuD) (Agrobacterium vitis (Rhizobium vitis)).